Reading from the N-terminus, the 207-residue chain is B2 protein (207 aa).

Residues 1–68 (MIDQEESNFN…FKTLPPAESL (68 aa)) form a disordered region. 2 stretches are compositionally biased toward low complexity: residues 8–26 (NFNF…QFHG) and 35–52 (KNNN…GENK). Residues 72 to 204 (ETVGGYIFVC…AISLLDIFEE (133 aa)) enclose the DCD domain.

The chain is B2 protein from Daucus carota (Wild carrot).